We begin with the raw amino-acid sequence, 251 residues long: FHA domain-containing protein FHA1 (251 aa).

The region spanning 32–89 (IILGRNSKKSTVDVDLSSLGGGMNISRNHARIFYDFTRRRFSLEVLGKNGCFVEGVLH) is the FHA domain. The span at 163–174 (EYDDEDDDEEED) shows a compositional bias: acidic residues. The tract at residues 163-209 (EYDDEDDDEEEDIRGSGKKTWRDGHEGVYASGEKKREGRSKADREAD) is disordered. Over residues 182-206 (TWRDGHEGVYASGEKKREGRSKADR) the composition is skewed to basic and acidic residues.

As to expression, expressed in roots and vascular tissues near the shoot apex in young seedlings.

Its subcellular location is the nucleus. May play a role in the control of plant organ development. Does not show transactivation activity in yeast. This is FHA domain-containing protein FHA1 from Arabidopsis thaliana (Mouse-ear cress).